Here is a 193-residue protein sequence, read N- to C-terminus: MGYPELLRVLGEEAAREAREVRAAADRECARILSEARAAADGARAAVLARVREESEAHRRASREAIALERERALLVERRRQLERLRLEALARLRGAGGPALDAALLAELLPEAGDGPLEVIVDPGAEAEVGRALASLDPAVAARAAVRAAPEARGGVALVAGRRVLDDTLPSRLDRAWTVLEAEVARLLFGEG.

Belongs to the V-ATPase E subunit family.

Its function is as follows. Produces ATP from ADP in the presence of a proton gradient across the membrane. This is V-type ATP synthase subunit E from Anaeromyxobacter sp. (strain Fw109-5).